The sequence spans 462 residues: tRNA-2-methylthio-N(6)-dimethylallyladenosine synthase (462 aa).

The MTTase N-terminal domain maps to 2–117; it reads KRYFIHTFGC…LPDIIGRVSA (116 aa). 6 residues coordinate [4Fe-4S] cluster: Cys11, Cys47, Cys80, Cys157, Cys161, and Cys164. Positions 143–372 constitute a Radical SAM core domain; sequence SRGKVTEFVT…QKLQRRISGE (230 aa). A TRAM domain is found at 375–437; it reads AALVGSEVEV…PNQLAGKQVA (63 aa).

Belongs to the methylthiotransferase family. MiaB subfamily. Monomer. [4Fe-4S] cluster serves as cofactor.

Its subcellular location is the cytoplasm. It catalyses the reaction N(6)-dimethylallyladenosine(37) in tRNA + (sulfur carrier)-SH + AH2 + 2 S-adenosyl-L-methionine = 2-methylsulfanyl-N(6)-dimethylallyladenosine(37) in tRNA + (sulfur carrier)-H + 5'-deoxyadenosine + L-methionine + A + S-adenosyl-L-homocysteine + 2 H(+). In terms of biological role, catalyzes the methylthiolation of N6-(dimethylallyl)adenosine (i(6)A), leading to the formation of 2-methylthio-N6-(dimethylallyl)adenosine (ms(2)i(6)A) at position 37 in tRNAs that read codons beginning with uridine. The polypeptide is tRNA-2-methylthio-N(6)-dimethylallyladenosine synthase (Myxococcus xanthus (strain DK1622)).